A 352-amino-acid chain; its full sequence is Staphylococcal superantigen-like 3 (352 aa).

The signal sequence occupies residues 1–30; the sequence is MKMRTIAKTSLALGLLTTGAITVTTQSVKA. Positions 61 to 165 are disordered; sequence ATTQAANTRQ…TIKQAQTDMT (105 aa). The segment covering 69–104 has biased composition (basic and acidic residues); it reads RQERTPKLEKAPNTNEEKTSASKIEKISQPKQEEQK. Low complexity predominate over residues 114 to 141; it reads PKQEQSQTTTESTTPKTKVTTPPSTNTP. The span at 142 to 164 shows a compositional bias: polar residues; sequence QPMQSTKSDTPQSPTIKQAQTDM. Residues 228–326 form a sialyl Lewis X-binding region; sequence IDVFIVLEDN…VIKMKNGGKY (99 aa).

The protein belongs to the staphylococcal/streptococcal toxin family. In terms of assembly, interacts with host TLR2 (via its extracellular domain).

The protein localises to the secreted. Its function is as follows. Secreted protein that plays an essential role in immune innate response inhibition by interacting with and inhibiting host TLR2. In turn, bacteria recognition by immune cells is impaired and cytokine production is inhibited. Mechanistically, by interacting with TLR2, blocks ligand binding and thus inhibits activation. Second, by interacting with an already formed TLR2-lipopeptide complex, prevents TLR heterodimerization and downstream signaling. The interaction with host TLR2 does not involve sialyl Lewis X interactions. This Staphylococcus aureus (strain Newman) protein is Staphylococcal superantigen-like 3.